The sequence spans 804 residues: Leucine--tRNA ligase (804 aa).

The 'HIGH' region motif lies at 40 to 51 (PYPSGAGLHVGH). The 'KMSKS' region motif lies at 576-580 (KMSKS). Lys579 contacts ATP.

Belongs to the class-I aminoacyl-tRNA synthetase family.

Its subcellular location is the cytoplasm. It carries out the reaction tRNA(Leu) + L-leucine + ATP = L-leucyl-tRNA(Leu) + AMP + diphosphate. The sequence is that of Leucine--tRNA ligase from Bacillus pumilus (strain SAFR-032).